The chain runs to 304 residues: Oxidoreductase calM (304 aa).

The NADP(+) site is built by Ile26, Thr45, Asp68, and Asn98. The active-site Proton donor is Ser152. The NADP(+) site is built by Tyr166, Lys170, Val200, and Thr202. Tyr166 acts as the Proton acceptor in catalysis. Lys170 acts as the Lowers pKa of active site Tyr in catalysis.

Belongs to the short-chain dehydrogenases/reductases (SDR) family.

It functions in the pathway secondary metabolite biosynthesis. Functionally, oxidoreductase; part of the gene cluster that mediates the biosynthesis of calbistrin A and related compounds. Calbistrin A is a secondary metabolite with an interesting structure that was recently found to have bioactivity against leukemia cells. It consists of two polyketides linked by an ester bond: a bicyclic decalin containing polyketide and a linear 12 carbon dioic acid structure. The polyketide synthase calA is probably responsible for forming the decalin moiety. Because calA lacks a designated enoylreductase (ER) domain, the required activity is provided by the trans-enoyl reductase calK. Following release from the PKS, calF then probably catalyzes the oxidation and the subsequent Diels Alder cycloisomerization that lead to the formation of the decalin moiety. The decalin polyketide backbone includes two C-methyl groups, at C7 and C11 in backbone, of which the C7 position is probably methylated by the methyltransferase domain of calA. A candidate for adding the methyl group at C11, if not done by CalA, is the cluster methyltransferase calH. Several additional tailoring enzymes within the cluster could be involved in the modification of the decalin polyketide product. Those include the 3 cytochrome P450 monooxygenases CalE, CalG and CalL, of which one might be responsible for the introduction of the extra hydroxyl group attached to the backbone of the decalin moiety, at position C9 in the backbone, that allows for attachment of the linear moiety. One tailoring enzyme activity that is expected to be involved in biosynthesis of calbistrin is an acyltransferase for connecting the two polyketide synthase products, and which could be performed by the cluster acyltransferase calJ. The enzyme responsible for the biosynthesis of the linear moiety, probably a second PKS, has not been identified yet. This Penicillium decumbens protein is Oxidoreductase calM.